The chain runs to 529 residues: Autoinducer-2 kinase (529 aa).

Belongs to the FGGY kinase family.

It is found in the cytoplasm. It carries out the reaction (S)-4,5-dihydroxypentane-2,3-dione + ATP = (2S)-2-hydroxy-3,4-dioxopentyl phosphate + ADP + H(+). Functionally, catalyzes the phosphorylation of autoinducer-2 (AI-2) to phospho-AI-2, which subsequently inactivates the transcriptional regulator LsrR and leads to the transcription of the lsr operon. Phosphorylates the ring-open form of (S)-4,5-dihydroxypentane-2,3-dione (DPD), which is the precursor to all AI-2 signaling molecules, at the C5 position. The protein is Autoinducer-2 kinase of Yersinia enterocolitica serotype O:8 / biotype 1B (strain NCTC 13174 / 8081).